Consider the following 413-residue polypeptide: Peptidase T (413 aa).

Residue His84 participates in Zn(2+) binding. Residue Asp86 is part of the active site. Position 147 (Asp147) interacts with Zn(2+). Residue Glu181 is the Proton acceptor of the active site. The Zn(2+) site is built by Glu182, Asp204, and His386.

Belongs to the peptidase M20B family. Zn(2+) serves as cofactor.

Its subcellular location is the cytoplasm. It carries out the reaction Release of the N-terminal residue from a tripeptide.. Its function is as follows. Cleaves the N-terminal amino acid of tripeptides. This chain is Peptidase T, found in Ligilactobacillus salivarius (strain UCC118) (Lactobacillus salivarius).